A 177-amino-acid chain; its full sequence is ATP synthase subunit delta (177 aa).

This sequence belongs to the ATPase delta chain family. F-type ATPases have 2 components, F(1) - the catalytic core - and F(0) - the membrane proton channel. F(1) has five subunits: alpha(3), beta(3), gamma(1), delta(1), epsilon(1). F(0) has three main subunits: a(1), b(2) and c(10-14). The alpha and beta chains form an alternating ring which encloses part of the gamma chain. F(1) is attached to F(0) by a central stalk formed by the gamma and epsilon chains, while a peripheral stalk is formed by the delta and b chains.

It is found in the cell inner membrane. Its function is as follows. F(1)F(0) ATP synthase produces ATP from ADP in the presence of a proton or sodium gradient. F-type ATPases consist of two structural domains, F(1) containing the extramembraneous catalytic core and F(0) containing the membrane proton channel, linked together by a central stalk and a peripheral stalk. During catalysis, ATP synthesis in the catalytic domain of F(1) is coupled via a rotary mechanism of the central stalk subunits to proton translocation. In terms of biological role, this protein is part of the stalk that links CF(0) to CF(1). It either transmits conformational changes from CF(0) to CF(1) or is implicated in proton conduction. This chain is ATP synthase subunit delta, found in Neisseria meningitidis serogroup A / serotype 4A (strain DSM 15465 / Z2491).